A 461-amino-acid chain; its full sequence is Argininosuccinate lyase (461 aa).

This sequence belongs to the lyase 1 family. Argininosuccinate lyase subfamily.

The protein resides in the cytoplasm. The catalysed reaction is 2-(N(omega)-L-arginino)succinate = fumarate + L-arginine. It functions in the pathway amino-acid biosynthesis; L-arginine biosynthesis; L-arginine from L-ornithine and carbamoyl phosphate: step 3/3. The protein is Argininosuccinate lyase of Streptococcus thermophilus (strain CNRZ 1066).